A 349-amino-acid polypeptide reads, in one-letter code: Glycerol-3-phosphate dehydrogenase [NAD(+)], cytoplasmic (349 aa).

An NAD(+)-binding site is contributed by 10 to 15 (GSGNWG). Lys-120 provides a ligand contact to substrate. Ala-153 provides a ligand contact to NAD(+). Ser-154 carries the post-translational modification Phosphoserine. Residue Lys-204 is the Proton acceptor of the active site. An NAD(+)-binding site is contributed by Arg-269. 269–270 (RN) serves as a coordination point for substrate. Lys-289 carries the N6-succinyllysine modification. Positions 296 and 298 each coordinate NAD(+). Residue Tyr-326 is modified to Phosphotyrosine.

Belongs to the NAD-dependent glycerol-3-phosphate dehydrogenase family. As to quaternary structure, homodimer.

Its subcellular location is the cytoplasm. It catalyses the reaction sn-glycerol 3-phosphate + NAD(+) = dihydroxyacetone phosphate + NADH + H(+). Functionally, has glycerol-3-phosphate dehydrogenase activity. This Rattus norvegicus (Rat) protein is Glycerol-3-phosphate dehydrogenase [NAD(+)], cytoplasmic.